The chain runs to 470 residues: ATP synthase subunit beta (470 aa).

Position 155 to 162 (155 to 162 (GGAGVGKT)) interacts with ATP.

This sequence belongs to the ATPase alpha/beta chains family. As to quaternary structure, F-type ATPases have 2 components, CF(1) - the catalytic core - and CF(0) - the membrane proton channel. CF(1) has five subunits: alpha(3), beta(3), gamma(1), delta(1), epsilon(1). CF(0) has three main subunits: a(1), b(2) and c(9-12). The alpha and beta chains form an alternating ring which encloses part of the gamma chain. CF(1) is attached to CF(0) by a central stalk formed by the gamma and epsilon chains, while a peripheral stalk is formed by the delta and b chains.

The protein localises to the cell membrane. The catalysed reaction is ATP + H2O + 4 H(+)(in) = ADP + phosphate + 5 H(+)(out). Produces ATP from ADP in the presence of a proton gradient across the membrane. The catalytic sites are hosted primarily by the beta subunits. This is ATP synthase subunit beta from Staphylococcus haemolyticus (strain JCSC1435).